We begin with the raw amino-acid sequence, 660 residues long: Bifunctional polymyxin resistance protein ArnA (660 aa).

Residues 1 to 304 (MKAVIFAYHD…TLGLVAGARL (304 aa)) form a formyltransferase ArnAFT region. H104 functions as the Proton donor; for formyltransferase activity in the catalytic mechanism. Residues R114 and 136 to 140 (VKRAD) each bind (6R)-10-formyltetrahydrofolate. Positions 314 to 660 (RRIRVLILGV…RSVDVAERAS (347 aa)) are dehydrogenase ArnADH. Residues D347 and 368–369 (DI) contribute to the NAD(+) site. UDP-alpha-D-glucuronate is bound by residues A393, Y398, and 432–433 (TS). The Proton acceptor; for decarboxylase activity role is filled by E434. Residues R460, N492, 526 to 535 (KLIDGGQQKR), and Y613 contribute to the UDP-alpha-D-glucuronate site. R619 acts as the Proton donor; for decarboxylase activity in catalysis.

This sequence in the N-terminal section; belongs to the Fmt family. UDP-L-Ara4N formyltransferase subfamily. The protein in the C-terminal section; belongs to the NAD(P)-dependent epimerase/dehydratase family. UDP-glucuronic acid decarboxylase subfamily. Homohexamer, formed by a dimer of trimers.

It catalyses the reaction UDP-alpha-D-glucuronate + NAD(+) = UDP-beta-L-threo-pentopyranos-4-ulose + CO2 + NADH. It carries out the reaction UDP-4-amino-4-deoxy-beta-L-arabinose + (6R)-10-formyltetrahydrofolate = UDP-4-deoxy-4-formamido-beta-L-arabinose + (6S)-5,6,7,8-tetrahydrofolate + H(+). The protein operates within nucleotide-sugar biosynthesis; UDP-4-deoxy-4-formamido-beta-L-arabinose biosynthesis; UDP-4-deoxy-4-formamido-beta-L-arabinose from UDP-alpha-D-glucuronate: step 1/3. Its pathway is nucleotide-sugar biosynthesis; UDP-4-deoxy-4-formamido-beta-L-arabinose biosynthesis; UDP-4-deoxy-4-formamido-beta-L-arabinose from UDP-alpha-D-glucuronate: step 3/3. It functions in the pathway bacterial outer membrane biogenesis; lipopolysaccharide biosynthesis. Its function is as follows. Bifunctional enzyme that catalyzes the oxidative decarboxylation of UDP-glucuronic acid (UDP-GlcUA) to UDP-4-keto-arabinose (UDP-Ara4O) and the addition of a formyl group to UDP-4-amino-4-deoxy-L-arabinose (UDP-L-Ara4N) to form UDP-L-4-formamido-arabinose (UDP-L-Ara4FN). The modified arabinose is attached to lipid A and is required for resistance to polymyxin and cationic antimicrobial peptides. This is Bifunctional polymyxin resistance protein ArnA from Salmonella paratyphi C (strain RKS4594).